Reading from the N-terminus, the 314-residue chain is Trihelix transcription factor ASR3 (314 aa).

Residues 1–34 (MALEQLGLGVSAVDGGENSSAPSNDGGDDGVKTA) form a disordered region. The Myb-like domain occupies 38–104 (RWTRQEILVL…QCRKRWSNLA (67 aa)). The short motif at 84–91 (CKRHGVNR) is the Nuclear localization signal element. The EAR 1 signature appears at 161-165 (LSLGL). Threonine 189 bears the Phosphothreonine; by MAPK4 mark. A disordered region spans residues 207-255 (CVADQGRVKEKQPEAANVEGGSTSQEERKRKRTSFGEKEEEEEEGETKK). Positions 280 to 284 (LNLKL) match the EAR 2 motif.

As to quaternary structure, homodimer. Interacts directly with MPK4. In terms of processing, phosphorylated on Thr-189 by MPK4 in response to microbe-associated molecular patterns (MAMPs, e.g. flg22, elf18, chitin, and LPS). This phosphorylation enhances DNA-binding and thus negatively regulates immune gene expression.

Its subcellular location is the nucleus. Functionally, transcriptional repressor that binds DNA and plays a negative role in regulating microbe-associated molecular patterns-(MAMPs, e.g. flg22, elf18, chitin, and LPS) triggered immunity (PTI) by negatively regulating immune gene expression. In Arabidopsis thaliana (Mouse-ear cress), this protein is Trihelix transcription factor ASR3.